The sequence spans 132 residues: Translation initiation factor 5A (132 aa).

Hypusine is present on Lys36.

The protein belongs to the eIF-5A family.

The protein resides in the cytoplasm. Functions by promoting the formation of the first peptide bond. In Thermofilum pendens (strain DSM 2475 / Hrk 5), this protein is Translation initiation factor 5A (eIF5A).